Here is a 437-residue protein sequence, read N- to C-terminus: Trigger factor (437 aa).

The PPIase FKBP-type domain maps to 161–246; the sequence is DDQVNIDFVG…VNSVSAPVLP (86 aa).

Belongs to the FKBP-type PPIase family. Tig subfamily.

The protein localises to the cytoplasm. It carries out the reaction [protein]-peptidylproline (omega=180) = [protein]-peptidylproline (omega=0). Its function is as follows. Involved in protein export. Acts as a chaperone by maintaining the newly synthesized protein in an open conformation. Functions as a peptidyl-prolyl cis-trans isomerase. The polypeptide is Trigger factor (Pseudomonas putida (strain ATCC 700007 / DSM 6899 / JCM 31910 / BCRC 17059 / LMG 24140 / F1)).